A 568-amino-acid chain; its full sequence is Potassium-transporting ATPase potassium-binding subunit (568 aa).

A run of 11 helical transmembrane segments spans residues 6-26, 64-84, 135-155, 179-199, 254-274, 285-305, 382-402, 419-439, 459-481, 488-508, and 529-549; these read ILQILAFTAIIWALAKPIGGF, TGYAGSLLAFSLVSLLFTYLI, IALATHNFFSAAAGIAVAIAF, LYILLPMSLLAALFFCSQGVI, LANLAQMVLIFLIPAGLTYTF, WALLAAMTVLFLAGVCVVYPA, GLYGMLLFAILAVFIAGLMVG, MVMLSVLVLALCILGFSAAGI, VLYGYTSAAGNNGSAFAGLSANT, LGIAMLCGRFLMLIPLLAAAG, and LFVTLLVGVVVIVGALTFFPA.

The protein belongs to the KdpA family. The system is composed of three essential subunits: KdpA, KdpB and KdpC.

It localises to the cell inner membrane. Its function is as follows. Part of the high-affinity ATP-driven potassium transport (or Kdp) system, which catalyzes the hydrolysis of ATP coupled with the electrogenic transport of potassium into the cytoplasm. This subunit binds the periplasmic potassium ions and delivers the ions to the membrane domain of KdpB through an intramembrane tunnel. The sequence is that of Potassium-transporting ATPase potassium-binding subunit from Solibacter usitatus (strain Ellin6076).